The primary structure comprises 326 residues: Probable pectate lyase B (326 aa).

The signal sequence occupies residues 1–15 (MRVTAILTLATIAIA). Positions 133, 162, and 166 each coordinate Ca(2+). The active site involves Arg219.

This sequence belongs to the polysaccharide lyase 1 family. Ca(2+) serves as cofactor.

It is found in the secreted. The catalysed reaction is Eliminative cleavage of (1-&gt;4)-alpha-D-galacturonan to give oligosaccharides with 4-deoxy-alpha-D-galact-4-enuronosyl groups at their non-reducing ends.. In terms of biological role, pectinolytic enzyme consist of four classes of enzymes: pectin lyase, polygalacturonase, pectin methylesterase and rhamnogalacturonase. Among pectinolytic enzymes, pectin lyase is the most important in depolymerization of pectin, since it cleaves internal glycosidic bonds of highly methylated pectins. Favors pectate, the anion, over pectin, the methyl ester. The chain is Probable pectate lyase B (plyB) from Aspergillus flavus (strain ATCC 200026 / FGSC A1120 / IAM 13836 / NRRL 3357 / JCM 12722 / SRRC 167).